A 714-amino-acid polypeptide reads, in one-letter code: Lipase maturation factor 2 (714 aa).

Helical transmembrane passes span 11–31 (LFLAGLAAAYLAAFVSLYLQI), 79–99 (MELLCLLGAVASMGALLCAPL), 103–125 (LLFAVLRVFYLSLYQVGQVFLYF), 159–179 (SVTFWLVRWLLFRLMFASGVV), 221–241 (FSVVATYVIEIAVPLLFFMPI), 257–277 (ILIILTGNYNFFNALTIVLAF), 304–324 (TLLSFLSTLLELATYALLLYW), 358–378 (VTLPLVGLGFLSLSWEILSAL), and 398–418 (AVFATATVGMFAISLVPFTYI). N-linked (GlcNAc...) asparagine glycosylation occurs at Asn-483. Residues 629–649 (PFSPHVVLWSLYVVAATTCLL) form a helical membrane-spanning segment. Residues 654–669 (RRPRGGAPPTRHKAPK) are compositionally biased toward basic residues. Residues 654 to 714 (RRPRGGAPPT…EGPRGTKRRK (61 aa)) form a disordered region. Residues 683–708 (RRKEGREAEERGEGRSRGAADGEGPR) are compositionally biased toward basic and acidic residues.

The protein belongs to the lipase maturation factor family.

Its subcellular location is the endoplasmic reticulum membrane. Involved in the maturation of specific proteins in the endoplasmic reticulum. May be required for maturation and transport of active lipoprotein lipase (LPL) through the secretory pathway. This Gallus gallus (Chicken) protein is Lipase maturation factor 2 (LMF2).